The following is an 87-amino-acid chain: Retinal rod rhodopsin-sensitive cGMP 3',5'-cyclic phosphodiesterase subunit gamma (87 aa).

Met1 carries the post-translational modification N-acetylmethionine. Residues 1-12 show a composition bias toward basic and acidic residues; it reads MNLEPPKAEIRS. Residues 1-55 form a disordered region; that stretch reads MNLEPPKAEIRSATRVMGGPVTPRKGPPKFKQRQTRQFKSKPPKKGVQGFGDDIP. Positions 26 to 44 are enriched in basic residues; the sequence is GPPKFKQRQTRQFKSKPPK.

The protein belongs to the rod/cone cGMP-PDE gamma subunit family. In terms of assembly, oligomer composed of two catalytic chains (alpha and beta), an inhibitory chain (gamma) and the delta chain.

The catalysed reaction is 3',5'-cyclic GMP + H2O = GMP + H(+). Participates in processes of transmission and amplification of the visual signal. cGMP-PDEs are the effector molecules in G-protein-mediated phototransduction in vertebrate rods and cones. This chain is Retinal rod rhodopsin-sensitive cGMP 3',5'-cyclic phosphodiesterase subunit gamma (PDE6G), found in Bos taurus (Bovine).